The chain runs to 147 residues: Nucleoside diphosphate kinase (147 aa).

The ATP site is built by lysine 9, phenylalanine 57, arginine 85, threonine 91, arginine 102, and asparagine 112. Histidine 115 acts as the Pros-phosphohistidine intermediate in catalysis.

Belongs to the NDK family. In terms of assembly, homotetramer. The cofactor is Mg(2+).

Its subcellular location is the cytoplasm. It catalyses the reaction a 2'-deoxyribonucleoside 5'-diphosphate + ATP = a 2'-deoxyribonucleoside 5'-triphosphate + ADP. The catalysed reaction is a ribonucleoside 5'-diphosphate + ATP = a ribonucleoside 5'-triphosphate + ADP. Major role in the synthesis of nucleoside triphosphates other than ATP. The ATP gamma phosphate is transferred to the NDP beta phosphate via a ping-pong mechanism, using a phosphorylated active-site intermediate. The sequence is that of Nucleoside diphosphate kinase from Thermosipho africanus (strain TCF52B).